The primary structure comprises 131 residues: Small ribosomal subunit protein uS11 (131 aa).

It belongs to the universal ribosomal protein uS11 family. As to quaternary structure, part of the 30S ribosomal subunit. Interacts with proteins S7 and S18. Binds to IF-3.

Located on the platform of the 30S subunit, it bridges several disparate RNA helices of the 16S rRNA. Forms part of the Shine-Dalgarno cleft in the 70S ribosome. The protein is Small ribosomal subunit protein uS11 of Trichormus variabilis (strain ATCC 29413 / PCC 7937) (Anabaena variabilis).